A 530-amino-acid chain; its full sequence is AA9 family lytic polysaccharide monooxygenase C (530 aa).

Residues 1–18 (MQLKSTVHFLSLLAYTAA) form the signal peptide. Cu(2+) is bound by residues H19 and H103. Disulfide bonds link C72-C190 and C114-C118. N150 carries an N-linked (GlcNAc...) asparagine glycan. Q185 contributes to the O2 binding site. Y187 lines the Cu(2+) pocket. Over residues 238-251 (YGSGSSSSQNSVES) the composition is skewed to low complexity. Disordered stretches follow at residues 238–279 (YGSG…STSA), 297–329 (ESSSALDAPKSTDAVKSVEAKETTKVEEVSSSA), 348–375 (YSSASPSSSPVLSSSKPASTSNPEKLSS), and 492–512 (GNGASAAAEPNTGTGSGGTTP). A compositionally biased stretch (basic and acidic residues) spans 312 to 324 (KSVEAKETTKVEE). Residues 348 to 368 (YSSASPSSSPVLSSSKPASTS) show a composition bias toward low complexity.

This sequence belongs to the polysaccharide monooxygenase AA9 family. Cu(2+) serves as cofactor.

The protein resides in the secreted. It catalyses the reaction [(1-&gt;4)-beta-D-glucosyl]n+m + reduced acceptor + O2 = 4-dehydro-beta-D-glucosyl-[(1-&gt;4)-beta-D-glucosyl]n-1 + [(1-&gt;4)-beta-D-glucosyl]m + acceptor + H2O.. In terms of biological role, lytic polysaccharide monooxygenase (LPMO) that depolymerizes polysaccharides via the oxidation of scissile alpha- or beta-(1-4)-glycosidic bonds, yielding C1 or C4 oxidation products. Catalysis by LPMOs requires the reduction of the active-site copper from Cu(II) to Cu(I) by a reducing agent and H(2)O(2) or O(2) as a cosubstrate. Amorphous cellulose is not a suitable substrate for LPMO9C, which may act at the surface of cellulose microfibrils without any release of soluble products. In Geotrichum candidum (Oospora lactis), this protein is AA9 family lytic polysaccharide monooxygenase C.